We begin with the raw amino-acid sequence, 389 residues long: S-adenosylmethionine synthase (389 aa).

H15 lines the ATP pocket. Residue D17 participates in Mg(2+) binding. E43 serves as a coordination point for K(+). L-methionine is bound by residues E56 and Q99. Residues 99-109 (QSPDIAQGVNE) form a flexible loop region. ATP contacts are provided by residues 166–168 (DAK), 234–235 (RF), D243, 249–250 (RK), A266, and K270. Residue D243 coordinates L-methionine. K274 is an L-methionine binding site.

The protein belongs to the AdoMet synthase family. Homotetramer; dimer of dimers. It depends on Mg(2+) as a cofactor. K(+) serves as cofactor.

The protein localises to the cytoplasm. The catalysed reaction is L-methionine + ATP + H2O = S-adenosyl-L-methionine + phosphate + diphosphate. Its pathway is amino-acid biosynthesis; S-adenosyl-L-methionine biosynthesis; S-adenosyl-L-methionine from L-methionine: step 1/1. Functionally, catalyzes the formation of S-adenosylmethionine (AdoMet) from methionine and ATP. The overall synthetic reaction is composed of two sequential steps, AdoMet formation and the subsequent tripolyphosphate hydrolysis which occurs prior to release of AdoMet from the enzyme. This is S-adenosylmethionine synthase from Neisseria meningitidis serogroup B (strain ATCC BAA-335 / MC58).